The following is a 274-amino-acid chain: Large ribosomal subunit protein uL2 (274 aa).

Disordered stretches follow at residues 1-23 (MAIK…SFEE) and 222-242 (GSAM…SPIG).

The protein belongs to the universal ribosomal protein uL2 family. In terms of assembly, part of the 50S ribosomal subunit. Forms a bridge to the 30S subunit in the 70S ribosome.

Its function is as follows. One of the primary rRNA binding proteins. Required for association of the 30S and 50S subunits to form the 70S ribosome, for tRNA binding and peptide bond formation. It has been suggested to have peptidyltransferase activity; this is somewhat controversial. Makes several contacts with the 16S rRNA in the 70S ribosome. The polypeptide is Large ribosomal subunit protein uL2 (Dehalococcoides mccartyi (strain ATCC BAA-2266 / KCTC 15142 / 195) (Dehalococcoides ethenogenes (strain 195))).